We begin with the raw amino-acid sequence, 442 residues long: Terpene cyclase aneC (442 aa).

Positions 196, 327, 331, and 335 each coordinate Mg(2+). Residues Arg-419 and Tyr-420 each coordinate (2E,6E)-farnesyl diphosphate.

It belongs to the terpene synthase family. In terms of assembly, homodimer. Requires Mg(2+) as cofactor.

The enzyme catalyses (2E,6E)-farnesyl diphosphate = dauca-4,7-diene + diphosphate. It participates in secondary metabolite biosynthesis. In terms of biological role, terpene cyclase; part of the gene cluster that mediates the biosynthesis of aculenes, a unique type of norsesquiterpenes that contain a nordaucane skeleton linked to an L-proline moiety and are of mixed biosynthetic origin. The pathway begins with the synthesis of dauca-4,7-diene by the terpene cyclase aneC using farnesyl pyrophosphate (FPP) as substrate. The cytochrome P450 monooxygenase aneF then performs the initial oxidation at C-12 of dauca-4,7-diene to yield asperaculane D. Asperaculane D is substrate of the cytochrome P450 monooxygenase aneD for C-10 hydroxylation to yield asperaculane E. The cytochrome P450 monooxygenase aneG then converts asperaculane E into aculene D via C-2 oxidation. The monomodular nonribosomal peptide synthtase aneB adenylates L-proline and the thiohydrolase aneE transfers this activated L-proline derivative to aculenes D and C to produce respectively aculenes B and A. The dioxygenase aneA converts aculene D into aculene C, and aculene B into aculene A by introducing the 5,6-alkene moiety. Asperculanes A, B, C and F, as well as 14-prolyl asperculane C, might be shunt products of the pathway. This Aspergillus aculeatus (strain ATCC 16872 / CBS 172.66 / WB 5094) protein is Terpene cyclase aneC.